The primary structure comprises 2188 residues: MGAQVTRQQTGTHENANIATNGSHITYNQINFYKDSYAASASKQDFSQDPSKFTEPVVEGLKAGAPVLKSPSAEACGYSDRVLQLKLGNSAIVTQEAANYCCAYGEWPNYLPDHEAVAIDKPTQPETSTDRFYTLRSVKWESNSTGWWWKLPDALNNIGMFGQNVQYHYLYRSGFLIHVQCNATKFHQGALLVVAIPEHQRGAHDTTTSPGFNDIMKGERGGTFNHPYVLDDGTSIACATIFPHQWINLRTNNSATIVLPWMNVAPMDFPLRHNQWTLAVIPVVPLGTRTMSSVVPITVSIAPMCCEFNGLRHAITQGVPTYLLPGSGQFLTTDDHSSAPVLPCFNPTPEMHIPGQIRNMLEMIQVESMMEINNTDGANGMERLRVDISVQADLDQLLFNIPLDIQLDGPLRNTLVGNISRYYTHWSGSLEMTFMFCGSFMATGKLILCYTPPGGSCPTTRETAMLGTHIVWDFGLQSSITLIIPWISGSHYRMFNSDAKSTNANVGYVTCFMQTNLIVPSESSDTCSLIGFIAAKDDFSLRLMRDSPDIGQSNHLHGAEAAYQVESIIKTATDTVKSEINAELGVVPSLNAVETGATSNTEPEEAIQTRTVINQHGVSETLVENFLGRAALVSKKSFEYKNHASSSAGTHKNFFKWTINTKSFVQLRRKLELFTYLRFDAEITILTTVAVNGNNDSTYMGLPDLTLQAMFVPTGALTPKEQDSFHWQSGSNASVFFKISDPPARMTIPFMCINSAYSVFYDGFAGFEKNGLYGINPADTIGNLCVRIVNEHQPVGFTVTVRVYMKPKHIKAWAPRPPRTMPYMSIANANYKGRDTAPNTLNAIIGNRASVTTMPHNIVTTGPGFGGVFVGSFKIINYHLATIEERQSAIYVDWQSDVLVTPIAAHGRHQIARCKCNTGVYYCRHRDRSYPICFEGPGIQWIEQNEYYPARYQTNVLLAAGPAEAGDCGGLLVCPHGVIGLLTAGGGGIVAFTDIRNLLWLDTDVMEQGITDYIQNLGNAFGAGFTETISNKAKEVQDMLIGESSLLEKLLKALIKIISALVIVIRNSEDLITVTATLALLGCHDSPWSYLKQKVCSYLGIPYVPRQSESWLKKFTEACNALRGLDWLSQKIDKFINWLKTKILPEAREKYEFVQRLKQLPVIEKQVSTIEHSCPTTERQQALFNNVQYYSHYCRKYAPLYAVESKRVAALEKKINNYIQFKSKSRIEPVCLIIHGSPGTGKSVASNLIARAITEKLGGDIYSLPPDPKYFDGYKQQTVVLMDDLMQNPDGNDISMFCQMVSTVDFIPPMASLEEKGTLYTSPFLIATTNAGSIHAPTVSDSKALSRRFKFDVDIEVTDSYKDSNKLDMSRAVEMCKPDNCTPTNYKRCCPLICGKAIQFRDRRTNARSTVDMLVTDIIKEYRTRNSTQDKLEALFQGPPQFKEIKISVAPDTPAPDAINDLLRSVDSQEVRDYCQKKGWIVIHPSNELVVEKHISRAFITLQAIATFVSIAGVVYVIYKLFAGIQGPYTGIPNPKPKVPSLRTAKVQGPGFDFAQAIMKKNTVIARTEKGEFTMLGVYDRVAVIPTHASVGEIIYINDVETRVLDACALRDLTDTNLEITIVKLDRNQKFRDIRHFLPRCEDDYNDAVLSVHTSKFPNMYIPVGQVTNYGFLNLGGTPTHRILMYNFPTRAGQCGGVVTTTGKVIGIHVGGNGAQGFAAMLLHSYFTDTQGEIVSNEKSGMCINAPAKTKLQPSVFHQVFEGSKEPAVLNSKDPRLKTDFEEAIFSKYTGNKIMLMDEYMEEAVDHYVGCLEPLDISVDPIPLENAMYGMEGLEALDLTTSAGFPYLLQGKKKRDIFNRQTRDTSEMTKMLEKYGVDLPFVTFVKDELRSREKVEKGKSRLIEASSLNDSVAMRVAFGNLYATFHNNPGTATGSAVGCDPDIFWSKIPILLDGEIFAFDYTGYDASLSPVWFACLKKVLIKLGYTHQTSFIDYLCHSVHLYKDRKYVINGGMPSGSSGTSIFNTMINNIIIRTLLIKVYKGIDLDQFKMIAYGDDVIASYPHKIDPGLLAEAGKHYGLVMTPADKGTSFIDTNWENVTFLKRYFRADDQYPFLIHPVMPMKEIHESIRWTKDPRNTQDHVRSLCYLAWHNGEEAYNEFCRKIRSVPVGRALTLPAYSSLRRKWLDSF.

Gly2 carries the N-myristoyl glycine; by host lipid modification. Over 2-1503 (GAQVTRQQTG…HISRAFITLQ (1502 aa)) the chain is Cytoplasmic. N-acetylneuraminate contacts are provided by Asp408, Arg412, Pro548, Asp549, Ile550, Arg834, Pro838, and Asn839. Active-site for protease 2A activity residues include His879 and Asp897. Residues Cys914 and Cys916 each coordinate Zn(2+). Cys968 acts as the For protease 2A activity in catalysis. Cys974 and His976 together coordinate Zn(2+). The interval 1108–1180 (SESWLKKFTE…EHSCPTTERQ (73 aa)) is membrane-binding. The tract at residues 1108–1246 (SESWLKKFTE…SPGTGKSVAS (139 aa)) is oligomerization. The RNA-binding stretch occupies residues 1129–1133 (SQKID). In terms of domain architecture, SF3 helicase spans 1212-1370 (EKKINNYIQF…YKDSNKLDMS (159 aa)). 1236–1243 (GSPGTGKS) lines the ATP pocket. Residues Cys1376, Cys1389, and Cys1394 each contribute to the Zn(2+) site. The C4-type; degenerate zinc finger occupies 1376–1394 (CKPDNCTPTNYKRCCPLIC). Positions 1421–1428 (EYRTRNST) are RNA-binding. Residues 1432–1437 (LEALFQ) are oligomerization. The stretch at 1504-1519 (AIATFVSIAGVVYVIY) is an intramembrane region. Residues 1520 to 2188 (KLFAGIQGPY…SLRRKWLDSF (669 aa)) lie on the Cytoplasmic side of the membrane. Tyr1529 is modified (O-(5'-phospho-RNA)-tyrosine). In terms of domain architecture, Peptidase C3 spans 1549–1727 (GPGFDFAQAI…FAAMLLHSYF (179 aa)). Active-site for protease 3C activity residues include His1588, Glu1619, and Cys1695. Positions 1954 to 2069 (GEIFAFDYTG…SYPHKIDPGL (116 aa)) constitute a RdRp catalytic domain. Positions 1960 and 2055 each coordinate Mg(2+).

It belongs to the picornaviruses polyprotein family. In terms of assembly, interacts with capsid protein VP1 and capsid protein VP3 to form heterotrimeric protomers. Interacts with capsid protein VP0, and capsid protein VP3 to form heterotrimeric protomers. Five protomers subsequently associate to form pentamers which serve as building blocks for the capsid. Interacts with capsid protein VP2, capsid protein VP3 and capsid protein VP4 following cleavage of capsid protein VP0. As to quaternary structure, interacts with capsid protein VP1 and capsid protein VP3 in the mature capsid. In terms of assembly, interacts with capsid protein VP0 and capsid protein VP1 to form heterotrimeric protomers. Five protomers subsequently associate to form pentamers which serve as building blocks for the capsid. Interacts with capsid protein VP4 in the mature capsid. Interacts with protein 2C; this interaction may be important for virion morphogenesis. Interacts with host IRF7. Interacts with capsid protein VP1 and capsid protein VP3. As to quaternary structure, homodimer. In terms of assembly, homohexamer; forms a hexameric ring structure with 6-fold symmetry characteristic of AAA+ ATPases. Interacts (via N-terminus) with host RTN3 (via reticulon domain); this interaction is important for viral replication. Interacts with capsid protein VP3; this interaction may be important for virion morphogenesis. Interacts with protein 3CD. As to quaternary structure, homodimer. Interacts with host GBF1. Interacts (via GOLD domain) with host ACBD3 (via GOLD domain); this interaction allows the formation of a viral protein 3A/ACBD3 heterotetramer with a 2:2 stoichiometry, which will stimulate the recruitment of host PI4KB in order to synthesize PI4P at the viral RNA replication sites. In terms of assembly, interacts with RNA-directed RNA polymerase. Interacts with host IFIH1/MDA5; this interaction inhibits host IFIH1. As to quaternary structure, interacts with protein 3AB and with RNA-directed RNA polymerase. In terms of assembly, interacts with Viral protein genome-linked and with protein 3CD. Mg(2+) is required as a cofactor. Post-translationally, specific enzymatic cleavages in vivo by the viral proteases yield processing intermediates and the mature proteins. In terms of processing, myristoylation is required for the formation of pentamers during virus assembly. Further assembly of 12 pentamers and a molecule of genomic RNA generates the provirion. During virion maturation, immature virions are rendered infectious following cleavage of VP0 into VP4 and VP2. This maturation seems to be an autocatalytic event triggered by the presence of RNA in the capsid and it is followed by a conformational change infectious virion. Post-translationally, myristoylation is required during RNA encapsidation and formation of the mature virus particle. In terms of processing, VPg is uridylylated by the polymerase into VPg-pUpU. This acts as a nucleotide-peptide primer for the genomic RNA replication.

It is found in the virion. Its subcellular location is the host cytoplasm. It localises to the host cytoplasmic vesicle membrane. The protein resides in the host nucleus. It catalyses the reaction a ribonucleoside 5'-triphosphate + H2O = a ribonucleoside 5'-diphosphate + phosphate + H(+). It carries out the reaction Selective cleavage of Tyr-|-Gly bond in the picornavirus polyprotein.. The catalysed reaction is RNA(n) + a ribonucleoside 5'-triphosphate = RNA(n+1) + diphosphate. The enzyme catalyses Selective cleavage of Gln-|-Gly bond in the poliovirus polyprotein. In other picornavirus reactions Glu may be substituted for Gln, and Ser or Thr for Gly.. In terms of biological role, component of immature procapsids, which is cleaved into capsid proteins VP4 and VP2 after maturation. Allows the capsid to remain inactive before the maturation step. Its function is as follows. Forms an icosahedral capsid of pseudo T=3 symmetry with capsid proteins VP2 and VP3. The capsid is 300 Angstroms in diameter, composed of 60 copies of each capsid protein and enclosing the viral positive strand RNA genome. Capsid protein VP1 mainly forms the vertices of the capsid. Capsid protein VP1, together with VP3, interacts with host cell sialic acids to provide virion attachment to target host cells. This attachment induces virion internalization. After binding to its receptor, the capsid undergoes conformational changes. Capsid protein VP1 N-terminus (that contains an amphipathic alpha-helix) and capsid protein VP4 are externalized. Together, they shape a pore in the host membrane through which viral genome is translocated to host cell cytoplasm. Functionally, forms an icosahedral capsid of pseudo T=3 symmetry with capsid proteins VP2 and VP3. The capsid is 300 Angstroms in diameter, composed of 60 copies of each capsid protein and enclosing the viral positive strand RNA genome. Forms an icosahedral capsid of pseudo T=3 symmetry with capsid proteins VP2 and VP3. The capsid is 300 Angstroms in diameter, composed of 60 copies of each capsid protein and enclosing the viral positive strand RNA genome. Capsid protein VP3, together with VP1, interacts with host cell sialic acids to provide virion attachment to target host cells. In addition, inhibits the phosphorylation and nuclear translocation of host IRF7 and thereby suppresses downstream interferon production. In terms of biological role, lies on the inner surface of the capsid shell. After binding to the host receptor, the capsid undergoes conformational changes. Capsid protein VP4 is released, Capsid protein VP1 N-terminus is externalized, and together, they shape a pore in the host membrane through which the viral genome is translocated into the host cell cytoplasm. Its function is as follows. Cysteine protease that cleaves viral polyprotein and specific host proteins. It is responsible for the autocatalytic cleavage between the P1 and P2 regions, which is the first cleavage occurring in the polyprotein. Also cleaves the host translation initiation factor EIF4G1, in order to shut down the capped cellular mRNA translation. Inhibits the host nucleus-cytoplasm protein and RNA trafficking by cleaving host members of the nuclear pores. Counteracts stress granule formation probably by antagonizing its assembly or promoting its dissassembly. Also plays a role in the suppression of host innate immunity through cleavage of host TRAF3, a component of the signaling cascade required to produce type I interferons. Functionally, plays an essential role in the virus replication cycle by acting as a viroporin. Creates a pore in the host endoplasmic reticulum and as a consequence releases Ca2+ in the cytoplasm of infected cell. In turn, high levels of cytoplasmic calcium may trigger membrane trafficking and transport of viral ER-associated proteins to viroplasms, sites of viral genome replication. Induces and associates with structural rearrangements of intracellular membranes. Displays RNA-binding, nucleotide binding and NTPase activities. May play a role in virion morphogenesis and viral RNA encapsidation by interacting with the capsid protein VP3. In terms of biological role, localizes the viral replication complex to the surface of membranous vesicles. Together with protein 3CD binds the Cis-Active RNA Element (CRE) which is involved in RNA synthesis initiation. Acts as a cofactor to stimulate the activity of 3D polymerase, maybe through a nucleid acid chaperone activity. Its function is as follows. Localizes the viral replication complex to the surface of membranous vesicles. It inhibits host cell endoplasmic reticulum-to-Golgi apparatus transport and causes the disassembly of the Golgi complex, possibly through GBF1 interaction. This would result in depletion of MHC, trail receptors and IFN receptors at the host cell surface. Plays an essential role in viral RNA replication by recruiting ACBD3 and PI4KB at the viral replication sites, thereby allowing the formation of the rearranged membranous structures where viral replication takes place. Functionally, acts as a primer for viral RNA replication and remains covalently bound to viral genomic RNA. VPg is uridylylated prior to priming replication into VPg-pUpU. The oriI viral genomic sequence may act as a template for this. The VPg-pUpU is then used as primer on the genomic RNA poly(A) by the RNA-dependent RNA polymerase to replicate the viral genome. During genome replication, the VPg-RNA linkage is removed by the host TDP2, thereby accelerating replication. During the late stage of the replication cycle, host TDP2 is excluded from sites of viral RNA synthesis and encapsidation, allowing for the generation of progeny virions. Involved in the viral replication complex and viral polypeptide maturation. It exhibits protease activity with a specificity and catalytic efficiency that is different from protease 3C. Protein 3CD lacks polymerase activity. Protein 3CD binds to the 5'UTR of the viral genome. In terms of biological role, major viral protease that mediates proteolytic processing of the polyprotein. Cleaves host EIF5B, contributing to host translation shutoff. Also cleaves host PABPC1, contributing to host translation shutoff. Binds and inhibits host IFIH1/MDA5, thereby inhibiting the type-I IFN production and the establishment of the antiviral state. Cleaves host MAP3K7/TAK1, resulting in inhibition of TRAF6-triggered NF-kappa-B induction. Cleaves host TICAM1; this interaction allows the virus to disrupt host TLR3 signaling. Cleaves host IRF7, resulting in inhibition of type-I IFN production. Cleaves host NLRP1, triggers host N-glycine-mediated degradation of the autoinhibitory NLRP1 N-terminal fragment. Its function is as follows. Replicates the viral genomic RNA on the surface of intracellular membranes. May form linear arrays of subunits that propagate along a strong head-to-tail interaction called interface-I. Covalently attaches UMP to a tyrosine of VPg, which is used to prime RNA synthesis. The positive stranded RNA genome is first replicated at virus induced membranous vesicles, creating a dsRNA genomic replication form. This dsRNA is then used as template to synthesize positive stranded RNA genomes. ss(+)RNA genomes are either translated, replicated or encapsidated. In Human enterovirus D68 (EV68), this protein is Genome polyprotein.